A 399-amino-acid chain; its full sequence is Succinate--CoA ligase [ADP-forming] subunit beta (399 aa).

The 246-residue stretch at Lys-9 to Glu-254 folds into the ATP-grasp domain. ATP contacts are provided by residues Lys-46, Gly-53–Gly-55, Glu-109, Ser-112, and Glu-117. 2 residues coordinate Mg(2+): Asn-209 and Asp-223. Substrate is bound by residues Asn-274 and Gly-331–Met-333.

Belongs to the succinate/malate CoA ligase beta subunit family. As to quaternary structure, heterotetramer of two alpha and two beta subunits. Requires Mg(2+) as cofactor.

It catalyses the reaction succinate + ATP + CoA = succinyl-CoA + ADP + phosphate. The catalysed reaction is GTP + succinate + CoA = succinyl-CoA + GDP + phosphate. It functions in the pathway carbohydrate metabolism; tricarboxylic acid cycle; succinate from succinyl-CoA (ligase route): step 1/1. Functionally, succinyl-CoA synthetase functions in the citric acid cycle (TCA), coupling the hydrolysis of succinyl-CoA to the synthesis of either ATP or GTP and thus represents the only step of substrate-level phosphorylation in the TCA. The beta subunit provides nucleotide specificity of the enzyme and binds the substrate succinate, while the binding sites for coenzyme A and phosphate are found in the alpha subunit. The polypeptide is Succinate--CoA ligase [ADP-forming] subunit beta (Nitrobacter winogradskyi (strain ATCC 25391 / DSM 10237 / CIP 104748 / NCIMB 11846 / Nb-255)).